The sequence spans 376 residues: Alanine racemase (376 aa).

The Proton acceptor; specific for D-alanine role is filled by lysine 40. Lysine 40 is subject to N6-(pyridoxal phosphate)lysine. A substrate-binding site is contributed by arginine 138. Tyrosine 270 acts as the Proton acceptor; specific for L-alanine in catalysis. Methionine 317 is a substrate binding site.

It belongs to the alanine racemase family. Pyridoxal 5'-phosphate serves as cofactor.

It carries out the reaction L-alanine = D-alanine. It functions in the pathway amino-acid biosynthesis; D-alanine biosynthesis; D-alanine from L-alanine: step 1/1. Its function is as follows. Catalyzes the interconversion of L-alanine and D-alanine. May also act on other amino acids. This chain is Alanine racemase (alr), found in Lactobacillus acidophilus (strain ATCC 700396 / NCK56 / N2 / NCFM).